Consider the following 335-residue polypeptide: Acetyl-coenzyme A carboxylase carboxyl transferase subunit alpha (335 aa).

The region spanning 40-294 (QLETLATRRR…KASIERHLSE (255 aa)) is the CoA carboxyltransferase C-terminal domain.

It belongs to the AccA family. Acetyl-CoA carboxylase is a heterohexamer composed of biotin carboxyl carrier protein (AccB), biotin carboxylase (AccC) and two subunits each of ACCase subunit alpha (AccA) and ACCase subunit beta (AccD).

The protein resides in the cytoplasm. It catalyses the reaction N(6)-carboxybiotinyl-L-lysyl-[protein] + acetyl-CoA = N(6)-biotinyl-L-lysyl-[protein] + malonyl-CoA. It participates in lipid metabolism; malonyl-CoA biosynthesis; malonyl-CoA from acetyl-CoA: step 1/1. Component of the acetyl coenzyme A carboxylase (ACC) complex. First, biotin carboxylase catalyzes the carboxylation of biotin on its carrier protein (BCCP) and then the CO(2) group is transferred by the carboxyltransferase to acetyl-CoA to form malonyl-CoA. The polypeptide is Acetyl-coenzyme A carboxylase carboxyl transferase subunit alpha (Prochlorococcus marinus (strain MIT 9515)).